We begin with the raw amino-acid sequence, 428 residues long: Arabinosyltransferase RRA2 (428 aa).

Residues 1 to 15 (MAGRRDRIQQLRGSR) are Cytoplasmic-facing. Residues 16-36 (IAIAIFVGILIGCVCSVLFPN) form a helical; Signal-anchor for type II membrane protein membrane-spanning segment. The Lumenal portion of the chain corresponds to 37–428 (GFFNSGSSLI…ALDSFPDGSD (392 aa)). Residues 250-252 (DVD) carry the DXD motif motif. N-linked (GlcNAc...) asparagine glycosylation is present at Asn-278.

Belongs to the glycosyltransferase 77 family. In terms of tissue distribution, expressed in roots, rosette and cauline leaves, stems, flowers and siliques.

The protein localises to the golgi apparatus membrane. Plays a role in the arabinosylation of cell wall components. Involved in the arabinosylation of extensin proteins in root hair cells. Extensins are structural glycoproteins present in cell walls and its arabinosylation is important for root hair cell development. This Arabidopsis thaliana (Mouse-ear cress) protein is Arabinosyltransferase RRA2.